Reading from the N-terminus, the 321-residue chain is MAAALRALDPAPARLAVAVSGGADSAMLAVAAAAALPPGCTLRLFHVHHGLQAAADQWAAQVRGLGALLGVPVDEARVTVPPGQGLGMEAAARLARYQALAGLARQHGVRHILLAHHRNDQAETVLLRLLRGTGLQGMAAMAPFSERDGVAYLRPWLDVDHAAILALAGAVRAQCGWQAVQDPTNTDPRYARAAVRTQLAPALDARWPGWQAIVARHARQMAEAAEIVAEVAQADFATLEPADAGRSFSLAAWRGLSAARQAQALRHWLASQDAPMPTEARLAELQRQLRQLHALGHDRHLRWQHAGRVVRCERGRVWIDD.

20–25 (SGGADS) is a binding site for ATP.

It belongs to the tRNA(Ile)-lysidine synthase family.

The protein resides in the cytoplasm. It catalyses the reaction cytidine(34) in tRNA(Ile2) + L-lysine + ATP = lysidine(34) in tRNA(Ile2) + AMP + diphosphate + H(+). In terms of biological role, ligates lysine onto the cytidine present at position 34 of the AUA codon-specific tRNA(Ile) that contains the anticodon CAU, in an ATP-dependent manner. Cytidine is converted to lysidine, thus changing the amino acid specificity of the tRNA from methionine to isoleucine. The protein is tRNA(Ile)-lysidine synthase of Bordetella pertussis (strain Tohama I / ATCC BAA-589 / NCTC 13251).